Consider the following 164-residue polypeptide: Peptide deformylase-like (164 aa).

Glu133 is an active-site residue.

This sequence belongs to the polypeptide deformylase family.

The polypeptide is Peptide deformylase-like (Agrobacterium fabrum (strain C58 / ATCC 33970) (Agrobacterium tumefaciens (strain C58))).